Here is a 203-residue protein sequence, read N- to C-terminus: Urease accessory protein UreG (203 aa).

Residue 11-18 coordinates GTP; the sequence is GPVGSGKT.

Belongs to the SIMIBI class G3E GTPase family. UreG subfamily. Homodimer. UreD, UreF and UreG form a complex that acts as a GTP-hydrolysis-dependent molecular chaperone, activating the urease apoprotein by helping to assemble the nickel containing metallocenter of UreC. The UreE protein probably delivers the nickel.

The protein localises to the cytoplasm. In terms of biological role, facilitates the functional incorporation of the urease nickel metallocenter. This process requires GTP hydrolysis, probably effectuated by UreG. This Prochlorococcus marinus (strain AS9601) protein is Urease accessory protein UreG.